The following is a 322-amino-acid chain: MNWLTNVVRPKIRNILRRETPENLWIKCPDTGQLVFYKDVEQNQFVIPGSNYHMRMGATARLRSVFDNETWYDVALPEVTADPLKFRDERKYVDRIKDARAKTGAHDAVKVGYGKLEGLGVVAAVQDFDFMGGSLGMAAGEAIIRGLELAVEKHAPFIMFAASGGARMQEGILSLMQMPRTTVAVQLLREAGLPYIVVLTNPTTGGVTASYAMLGDIQLAEPGALIGFAGARVIEQTIREKLPDGFQRAEYLRDHGMVDMVVHRHELRPTLARLCRILTKTPLPAVEEPAVVDDDAQDIEAVATEIVATPPEPAPPPAAPQA.

One can recognise a CoA carboxyltransferase N-terminal domain in the interval 24 to 293 (LWIKCPDTGQ…PAVEEPAVVD (270 aa)).

Belongs to the AccD/PCCB family. As to quaternary structure, acetyl-CoA carboxylase is a heterohexamer composed of biotin carboxyl carrier protein (AccB), biotin carboxylase (AccC) and two subunits each of ACCase subunit alpha (AccA) and ACCase subunit beta (AccD).

It localises to the cytoplasm. It carries out the reaction N(6)-carboxybiotinyl-L-lysyl-[protein] + acetyl-CoA = N(6)-biotinyl-L-lysyl-[protein] + malonyl-CoA. It participates in lipid metabolism; malonyl-CoA biosynthesis; malonyl-CoA from acetyl-CoA: step 1/1. Component of the acetyl coenzyme A carboxylase (ACC) complex. Biotin carboxylase (BC) catalyzes the carboxylation of biotin on its carrier protein (BCCP) and then the CO(2) group is transferred by the transcarboxylase to acetyl-CoA to form malonyl-CoA. This chain is Acetyl-coenzyme A carboxylase carboxyl transferase subunit beta, found in Rhodopseudomonas palustris (strain HaA2).